The sequence spans 344 residues: MGLGRELRRIGLEPVFSSFGEGREMLMREFPDAPVYGLPKIELFSEDGSFDLLLLLRRHPDLPLRFYAGVEADRRVIRRHGCKVVVSDCQFHALVAAQIIGVPAIVISNMLRVPGEGSLVRLINGMLRRMFELADIVLIPDTYDDTYDVPEIDTEVVWVGPILKRRPDELPPRDAVRRKYGIPDDATVVLVTAGGSKYGRRIVRIAVEGLKLLSKSIDVFPVIISEERVGDGLGLQLRYVDNLLELIKVSNVVITHGGHTTLSECACLRTPVVSVPLPNHPEQHMNAERVLQRGLGVAVPPEELSPKRIAEAIEQAIDWKVPKIRMMDGRGAERAARIVAGTLD.

It belongs to the glycosyltransferase 28 family.

This is an uncharacterized protein from Methanopyrus kandleri (strain AV19 / DSM 6324 / JCM 9639 / NBRC 100938).